A 132-amino-acid chain; its full sequence is Small ribosomal subunit protein uS8 (132 aa).

It belongs to the universal ribosomal protein uS8 family. In terms of assembly, part of the 30S ribosomal subunit. Contacts proteins S5 and S12.

One of the primary rRNA binding proteins, it binds directly to 16S rRNA central domain where it helps coordinate assembly of the platform of the 30S subunit. The protein is Small ribosomal subunit protein uS8 of Mycobacterium bovis (strain ATCC BAA-935 / AF2122/97).